The primary structure comprises 346 residues: MKQIINPLKGNNDKVPIWFMRQAGRYLPEYKKVRETTKNFLDFCYDVSKATEVTLQPIKRYGFDAAIIFSDILVLPHALGWEVDFKENIGPILKQFKSQEDFKYLQINPNYKLEKVYEIIKKVKKELPSPISLIGFAGSPWTVMSYMLEGKGKQDFKTSKKFIYENKILAEELLNFITEKTADHLINQAKSGADVLKLFDSWSGVLAEEEFTKFVIEPTKKIILKVKEVFPKTPIIAFPKGAGLLYEKFIKEVPIDVLAVDQMVPLEKMKEWSDKVIVQGNLDPVVLLTNKEIIKEKTYKILQAMKGKNFIFNLGHGILPETPTENVEFLTEYVRLYEEKNSNSTF.

Substrate-binding positions include 21-25, D71, Y146, S201, and H316; that span reads RQAGR.

The protein belongs to the uroporphyrinogen decarboxylase family. In terms of assembly, homodimer.

It is found in the cytoplasm. It carries out the reaction uroporphyrinogen III + 4 H(+) = coproporphyrinogen III + 4 CO2. It functions in the pathway porphyrin-containing compound metabolism; protoporphyrin-IX biosynthesis; coproporphyrinogen-III from 5-aminolevulinate: step 4/4. In terms of biological role, catalyzes the decarboxylation of four acetate groups of uroporphyrinogen-III to yield coproporphyrinogen-III. The chain is Uroporphyrinogen decarboxylase from Rickettsia rickettsii (strain Iowa).